We begin with the raw amino-acid sequence, 1530 residues long: Regulating synaptic membrane exocytosis protein 2 (1530 aa).

Positions 1–34 are disordered; the sequence is MSAPLGPRGRPAPTPAASQPPPQPEMPDLSHLTE. The segment covering 10 to 25 has biased composition (pro residues); it reads RPAPTPAASQPPPQPE. The 169-residue stretch at 26-194 folds into the RabBD domain; it reads MPDLSHLTEE…TKSGAWFYNS (169 aa). Residues 126–182 form an FYVE-type zinc finger; sequence KGDAPTCGICHKTKFADGCGHNCSYCQTKFCARCGGRVSLRSNKVMWVCNLCRKQQE. Positions 132, 135, 148, 151, 156, 159, 174, and 177 each coordinate Zn(2+). Disordered regions lie at residues 195–608 and 632–655; these read GSNT…ERQK and SGVD…HPVT. 5 stretches are compositionally biased toward basic and acidic residues: residues 210 to 225, 327 to 338, 357 to 375, 391 to 410, and 419 to 443; these read LRNE…KLHE, EPGHLNYRDSNR, RDEY…RYRS, EQMR…RHSD, and EDSR…RRAA. Position 409 is a phosphoserine (serine 409). The span at 458–472 shows a compositional bias: polar residues; the sequence is AQGQSSYPQRTSNHS. Residues 484–501 are compositionally biased toward basic and acidic residues; it reads DRPDMRRADSLRKQHHLD. Residues 519-530 show a composition bias toward polar residues; sequence RNDSLSSDQSES. A compositionally biased stretch (basic residues) spans 537–546; that stretch reads RPHKSKKGGK. Acidic residues predominate over residues 567 to 577; sequence SCDDVELESES. Composition is skewed to basic and acidic residues over residues 578–592 and 643–653; these read VSEK…RKTS and NEEHSHSDKHP. A PDZ domain is found at 677–763; the sequence is DGSVPRDSGA…EPQVELVVSR (87 aa). Residue threonine 698 is modified to Phosphothreonine. The tract at residues 771–802 is disordered; the sequence is IPDSTHAQLESSSSSFESQKMDRPSISVTSPM. A phosphoserine mark is found at serine 800 and serine 803. Residues 814–937 form the C2 1 domain; sequence LSGQLSIKLW…ALLDDEPHWY (124 aa). Disordered stretches follow at residues 948–982, 1003–1122, 1130–1149, 1154–1187, 1242–1263, and 1282–1307; these read PLPR…SEVS, LQSS…ERSA, RQMK…RLEQ, KYRS…SRTS, SLEK…TSGK, and KSRS…QRST. Polar residues predominate over residues 1003–1024; the sequence is LQSSTLSVPEQVMSSNHCSPSG. Positions 1067–1086 are enriched in basic and acidic residues; that stretch reads RMDRHRVMDDHYSSDRDRSH. A compositionally biased stretch (polar residues) spans 1088–1101; that stretch reads RTGSVQTSPSSTPG. Residue serine 1095 is modified to Phosphoserine. Residues 1154 to 1165 are compositionally biased toward basic and acidic residues; the sequence is KYRSGWDPHRGA. Residue serine 1175 is modified to Phosphoserine. Over residues 1178–1187 the composition is skewed to low complexity; that stretch reads SDVSAVSRTS. Serine 1251 bears the Phosphoserine mark. The C2 2 domain occupies 1376–1494; the sequence is AMGDIQVGMM…ELSNMVIGWF (119 aa). Phosphoserine occurs at positions 1515 and 1518.

Interacts with TSPOAP1 and RIMBP2. Interacts with PPFIA3 and PPFIA4. Interacts via its zinc finger with the first C2 domain of UNC13A. Forms a complex consisting of UNC13A, RIMS2 and RAB3A. Heterodimer with PCLO. Part of a ternary complex involving PCLO and EPAC2. Interacts with RAB3A and RAB3B that have been activated by GTP-binding. Interacts with RAB3C, RAB3D and RAB26. As to expression, detected in testis, pituitary and an insulinoma cell line. Detected at low levels in cerebellar cortex.

The protein localises to the synapse. Its subcellular location is the synaptosome. Its function is as follows. Rab effector involved in exocytosis. May act as scaffold protein. Plays a role in dendrite formation by melanocytes. In Mus musculus (Mouse), this protein is Regulating synaptic membrane exocytosis protein 2 (Rims2).